The sequence spans 424 residues: Histidine--tRNA ligase (424 aa).

It belongs to the class-II aminoacyl-tRNA synthetase family. In terms of assembly, homodimer.

It localises to the cytoplasm. It catalyses the reaction tRNA(His) + L-histidine + ATP = L-histidyl-tRNA(His) + AMP + diphosphate + H(+). The protein is Histidine--tRNA ligase of Salmonella typhi.